A 249-amino-acid chain; its full sequence is Coproheme decarboxylase (249 aa).

Fe-coproporphyrin III-binding positions include arginine 131, 145-149 (YPMDK), histidine 172, and glutamine 185. Tyrosine 145 is an active-site residue.

The protein belongs to the ChdC family. Type 1 subfamily. It depends on Fe-coproporphyrin III as a cofactor.

It catalyses the reaction Fe-coproporphyrin III + 2 H2O2 + 2 H(+) = heme b + 2 CO2 + 4 H2O. It carries out the reaction Fe-coproporphyrin III + H2O2 + H(+) = harderoheme III + CO2 + 2 H2O. The enzyme catalyses harderoheme III + H2O2 + H(+) = heme b + CO2 + 2 H2O. It participates in porphyrin-containing compound metabolism; protoheme biosynthesis. In terms of biological role, involved in coproporphyrin-dependent heme b biosynthesis. Catalyzes the decarboxylation of Fe-coproporphyrin III (coproheme) to heme b (protoheme IX), the last step of the pathway. The reaction occurs in a stepwise manner with a three-propionate intermediate. In Staphylococcus saprophyticus subsp. saprophyticus (strain ATCC 15305 / DSM 20229 / NCIMB 8711 / NCTC 7292 / S-41), this protein is Coproheme decarboxylase.